We begin with the raw amino-acid sequence, 297 residues long: GTPase Era (297 aa).

The Era-type G domain maps to lysine 3–glutamate 171. The G1 stretch occupies residues glycine 11–serine 18. Position 11–18 (glycine 11–serine 18) interacts with GTP. Residues glutamine 37–asparagine 41 are G2. Residues aspartate 58 to glycine 61 are G3. GTP-binding positions include aspartate 58–isoleucine 62 and asparagine 120–aspartate 123. Residues asparagine 120–aspartate 123 are G4. Positions isoleucine 150–alanine 152 are G5. The KH type-2 domain occupies isoleucine 194–glutamate 280.

This sequence belongs to the TRAFAC class TrmE-Era-EngA-EngB-Septin-like GTPase superfamily. Era GTPase family. In terms of assembly, monomer.

It is found in the cytoplasm. The protein localises to the cell membrane. Functionally, an essential GTPase that binds both GDP and GTP, with rapid nucleotide exchange. Plays a role in 16S rRNA processing and 30S ribosomal subunit biogenesis and possibly also in cell cycle regulation and energy metabolism. The protein is GTPase Era of Clostridioides difficile (strain 630) (Peptoclostridium difficile).